We begin with the raw amino-acid sequence, 151 residues long: Prefoldin subunit 5 (151 aa).

The stretch at 15–35 (IDQLKALKEQADLEVNLLQDS) forms a coiled coil.

Belongs to the prefoldin subunit alpha family. In terms of assembly, heterohexamer of two PFD-alpha type and four PFD-beta type subunits forming prefoldin co-chaperone complex. Interacts with PFD6. Binds to the DELLA protein GAI.

The protein localises to the cytoplasm. It localises to the nucleus. Binds specifically to cytosolic chaperonin (c-CPN) and transfers target proteins to it. Binds to nascent polypeptide chain and promotes folding in an environment in which there are many competing pathways for nonnative proteins. Together with other chaperonins, contribute to the regulation of gene expression by modulating the spliceosome function on pre-mRNA splicing post-transcriptionally by acting as a co-chaperone of Hsp90 to control levels of LSM8. Required for the biogenesis of tubulins and for subsequent microtubules (MTs) organization and dynamicity. Necessary for tolerance to NaCl salt stress. Involved in the process leading to microtubules dissociation in response to gibberellic acid (GA) probably due to the DELLA proteins-mediated translocation of the prefoldin co-chaperone complex from the cytoplasm to the nucleus. Prevents cold acclimation (e.g. 7 days at 4 degrees Celsius) in a DELLA proteins-dependent manner by promoting nuclear proteasome-mediated HY5 degradation, thus modulating the expression of several genes and reducing anthocyanin biosynthesis, but seems not involved in constitutive freezing tolerance. Contributes to the GA-dependent regulation of PIN2 trafficking at the plasma membrane, thus influencing auxin flux. The protein is Prefoldin subunit 5 of Arabidopsis thaliana (Mouse-ear cress).